Consider the following 282-residue polypeptide: MKFSKVASFAFLALSSQAALIQHDVIIENIKRDAVLAGSAENNIASSAFTKRESEVDSSEDVQLEKRISFAGIVSSIINQLPSIIQIIGNIIKAGLVKRDDIDDAFALVLAEYPHIVSVFEDAFGDFTEAKRDEAASVGTQILGSFPSILTQVVNGFSKVLDFANSDTFSTGLSILSNFTSIASSFASSLSSVVQNGKRDGVEDIVSMVVRQIPDLIVEASTPFVTNAEKMKRDADVAASLVDNLVKKGLSTAIDTFGAATVASVVSKRQVSSFLSKVLSKA.

The first 18 residues, methionine 1–alanine 18, serve as a signal peptide directing secretion. Residues isoleucine 68 to isoleucine 92 form a helical membrane-spanning segment.

It localises to the secreted. It is found in the host cell membrane. Secreted protein cleaved by KEX2 in 8 similar peptides (ECE1-I to ECE1-VIII). Stimulates biofilm formation. Functionally, acts as a cytolytic peptide toxin that directly damages host epithelial membranes, triggers a danger response signaling pathway and activates epithelial immunity. Probably acts similarly to cationic antimicrobial peptide toxins, inducing lesions after binding to target cell membranes and causing an inward current associated with calcium influx. The polypeptide is Extent of cell elongation protein 1 (Candida tropicalis (strain ATCC MYA-3404 / T1) (Yeast)).